Consider the following 196-residue polypeptide: SERTA domain-containing protein 3 (196 aa).

Residues Met1–Trp21 form a disordered region. Positions Leu26–Pro73 constitute an SERTA domain. The segment at Thr104–Val125 is disordered.

Interacts with RPA2. As to quaternary structure, (Microbial infection) Interacts with influenza virus PA, PB1 and PB2,leading to inhibition of RdRp complex assembly. In terms of assembly, (Microbial infection) Interacts with zika virus capsid protein.

It localises to the nucleus. In terms of biological role, antiviral interferon-stimulated protein that plays a role in innate immunity and in the suppression of viruses through different mechanisms. Plays a role in the late phase response of TLR-induced immune effector expression. During influenza infection, interacts with PB2, PB1, and PA to disrupt the formation of the viral RdRp complex. Inhibits zika virus by interacting with the capsid protein in the nucleolus and reducing its abundance through proteasomal degradation. Strong transcriptional coactivator. The sequence is that of SERTA domain-containing protein 3 (SERTAD3) from Homo sapiens (Human).